Here is a 401-residue protein sequence, read N- to C-terminus: 2,3,4,5-tetrahydropyridine-2,6-dicarboxylate N-succinyltransferase (401 aa).

The active-site Acyl-anhydride intermediate is glutamate 269. Residues arginine 271, glycine 286, serine 289, alanine 312, 327-328 (DA), glycine 335, and lysine 364 each bind succinyl-CoA.

It belongs to the type 2 tetrahydrodipicolinate N-succinyltransferase family. As to quaternary structure, homotrimer.

It localises to the cytoplasm. It carries out the reaction (S)-2,3,4,5-tetrahydrodipicolinate + succinyl-CoA + H2O = (S)-2-succinylamino-6-oxoheptanedioate + CoA. The protein operates within amino-acid biosynthesis; L-lysine biosynthesis via DAP pathway; LL-2,6-diaminopimelate from (S)-tetrahydrodipicolinate (succinylase route): step 1/3. Catalyzes the conversion of the cyclic tetrahydrodipicolinate (THDP) into the acyclic N-succinyl-L-2-amino-6-oxopimelate using succinyl-CoA. This chain is 2,3,4,5-tetrahydropyridine-2,6-dicarboxylate N-succinyltransferase, found in Helicobacter pylori (strain ATCC 700392 / 26695) (Campylobacter pylori).